The sequence spans 114 residues: T cell receptor beta variable 3-1 (114 aa).

The N-terminal stretch at 1-21 (MGCRLLCCVVFCLLQAGPLDT) is a signal peptide. The Ig-like domain maps to 22-114 (AVSQTPKYLV…SAVYFCASSQ (93 aa)). A disulfide bridge connects residues Cys42 and Cys110. N-linked (GlcNAc...) asparagine glycosylation occurs at Asn76.

Alpha-beta TR is a heterodimer composed of an alpha and beta chain; disulfide-linked. The alpha-beta TR is associated with the transmembrane signaling CD3 coreceptor proteins to form the TR-CD3 (TcR or TCR). The assembly of alpha-beta TR heterodimers with CD3 occurs in the endoplasmic reticulum where a single alpha-beta TR heterodimer associates with one CD3D-CD3E heterodimer, one CD3G-CD3E heterodimer and one CD247 homodimer forming a stable octameric structure. CD3D-CD3E and CD3G-CD3E heterodimers preferentially associate with TR alpha and TR beta chains, respectively. The association of the CD247 homodimer is the last step of TcR assembly in the endoplasmic reticulum and is required for transport to the cell surface.

The protein localises to the cell membrane. V region of the variable domain of T cell receptor (TR) beta chain that participates in the antigen recognition. Alpha-beta T cell receptors are antigen specific receptors which are essential to the immune response and are present on the cell surface of T lymphocytes. Recognize peptide-major histocompatibility (MH) (pMH) complexes that are displayed by antigen presenting cells (APC), a prerequisite for efficient T cell adaptive immunity against pathogens. Binding of alpha-beta TR to pMH complex initiates TR-CD3 clustering on the cell surface and intracellular activation of LCK that phosphorylates the ITAM motifs of CD3G, CD3D, CD3E and CD247 enabling the recruitment of ZAP70. In turn ZAP70 phosphorylates LAT, which recruits numerous signaling molecules to form the LAT signalosome. The LAT signalosome propagates signal branching to three major signaling pathways, the calcium, the mitogen-activated protein kinase (MAPK) kinase and the nuclear factor NF-kappa-B (NF-kB) pathways, leading to the mobilization of transcription factors that are critical for gene expression and essential for T cell growth and differentiation. The T cell repertoire is generated in the thymus, by V-(D)-J rearrangement. This repertoire is then shaped by intrathymic selection events to generate a peripheral T cell pool of self-MH restricted, non-autoaggressive T cells. Post-thymic interaction of alpha-beta TR with the pMH complexes shapes TR structural and functional avidity. This chain is T cell receptor beta variable 3-1, found in Homo sapiens (Human).